The primary structure comprises 339 residues: Probable cytosolic iron-sulfur protein assembly protein CIAO1 (339 aa).

WD repeat units follow at residues 14–53 (HPDS…WICK), 59–98 (GHQR…FECV), 103–142 (GHEN…EYEC), 148–187 (SHTQ…WVCC), 192–231 (GHES…NEQG), 250–289 (FHTR…DPQQ), and 301–339 (AHSQ…PAGL). Residues 176–178 (LYQ) carry the LYR motif; required for interaction with HSC20 motif.

It belongs to the WD repeat CIA1 family. As to quaternary structure, component of the CIA complex. Interacts with CIAO2A and forms a complex with CIAO2B and MMS19; the interactions with CIAO2A and CIAO2B are mutually exclusive. Interacts with CHD1L, ERCC2, IREB2 and POLD1. Component of the MMXD complex, which includes CIAO1, ERCC2, CIAO2B, MMS19 and SLC25A5. Interacts with WT1. Interacts with CIAO3. Interacts (via LYR motif) with HSC20.

Its subcellular location is the cytoplasm. Its function is as follows. Key component of the cytosolic iron-sulfur protein assembly (CIA) complex, a multiprotein complex that mediates the incorporation of iron-sulfur cluster into extramitochondrial Fe/S proteins. As a CIA complex component, interacts specifically with CIAO2A or CIAO2B and MMS19 to assist different branches of iron-sulfur protein assembly, depending of its interactors. The complex CIAO1:CIAO2B:MMS19 binds to and facilitates the assembly of most cytosolic-nuclear Fe/S proteins. CIAO1:CIAO2A specifically matures ACO1 and stabilizes IREB2. Seems to specifically modulate the transactivation activity of WT1. As part of the mitotic spindle-associated MMXD complex it may play a role in chromosome segregation. The protein is Probable cytosolic iron-sulfur protein assembly protein CIAO1 of Mus musculus (Mouse).